The following is a 239-amino-acid chain: Phosphoglycolate phosphatase (239 aa).

Catalysis depends on aspartate 9, which acts as the Nucleophile. Residues aspartate 9 and aspartate 11 each contribute to the Mg(2+) site. Lysine 157 is a substrate binding site. Aspartate 180 and aspartate 184 together coordinate Mg(2+).

Belongs to the archaeal SPP-like hydrolase family. Mg(2+) is required as a cofactor.

The catalysed reaction is 2-phosphoglycolate + H2O = glycolate + phosphate. Its function is as follows. Catalyzes the dephosphorylation of 2-phosphoglycolate. The chain is Phosphoglycolate phosphatase from Thermococcus kodakarensis (strain ATCC BAA-918 / JCM 12380 / KOD1) (Pyrococcus kodakaraensis (strain KOD1)).